We begin with the raw amino-acid sequence, 283 residues long: Release factor glutamine methyltransferase (283 aa).

S-adenosyl-L-methionine-binding positions include 121 to 125, Asp-144, and Asn-188; that span reads GTGSG. 188–191 lines the substrate pocket; the sequence is NPPY.

This sequence belongs to the protein N5-glutamine methyltransferase family. PrmC subfamily.

It carries out the reaction L-glutaminyl-[peptide chain release factor] + S-adenosyl-L-methionine = N(5)-methyl-L-glutaminyl-[peptide chain release factor] + S-adenosyl-L-homocysteine + H(+). Methylates the class 1 translation termination release factors RF1/PrfA and RF2/PrfB on the glutamine residue of the universally conserved GGQ motif. The chain is Release factor glutamine methyltransferase from Bacillus cereus (strain ATCC 14579 / DSM 31 / CCUG 7414 / JCM 2152 / NBRC 15305 / NCIMB 9373 / NCTC 2599 / NRRL B-3711).